A 374-amino-acid polypeptide reads, in one-letter code: Chaperone protein DnaJ (374 aa).

Positions 5 to 70 (CYYEILNVSK…SKRSRYDQFG (66 aa)) constitute a J domain. The CR-type zinc-finger motif lies at 130 to 207 (GVEKEITIPR…CYGNGKVKKQ (78 aa)). Residues Cys143, Cys146, Cys159, Cys162, Cys181, Cys184, Cys195, and Cys198 each contribute to the Zn(2+) site. 4 CXXCXGXG motif repeats span residues 143 to 150 (CDSCDGTG), 159 to 166 (CHACHGQG), 181 to 188 (CPVCNGTG), and 195 to 202 (CDACYGNG).

Belongs to the DnaJ family. As to quaternary structure, homodimer. The cofactor is Zn(2+).

Its subcellular location is the cytoplasm. Functionally, participates actively in the response to hyperosmotic and heat shock by preventing the aggregation of stress-denatured proteins and by disaggregating proteins, also in an autonomous, DnaK-independent fashion. Unfolded proteins bind initially to DnaJ; upon interaction with the DnaJ-bound protein, DnaK hydrolyzes its bound ATP, resulting in the formation of a stable complex. GrpE releases ADP from DnaK; ATP binding to DnaK triggers the release of the substrate protein, thus completing the reaction cycle. Several rounds of ATP-dependent interactions between DnaJ, DnaK and GrpE are required for fully efficient folding. Also involved, together with DnaK and GrpE, in the DNA replication of plasmids through activation of initiation proteins. In Francisella tularensis subsp. tularensis (strain FSC 198), this protein is Chaperone protein DnaJ.